The primary structure comprises 467 residues: MSQLLTARQAEELHKSIIAYLASVNLTESSAALRAELGDSVSIDDATLKKYEGLLEKKWTSVVRLQKKIMDLESRCAALQSELDSATPTSLLRKNQDPTSWLPRSPARHILEGHRNPVTCVAFHPVFSSLASGSDDTTIKIWDWELGELERTVKGHTKAVLDVDYGGPRGGTLLASCSSDLTIKLWDPSDNYKNIRTLPGHDHSVSSVRFIPSGAAGSPMSGNLLVSASRDKTLRIWDVTTGYCVKTLSGHVDWVRAVAPSIDGRFLLAAGDDRIPRLWDLSSAETKSTFLGHEHVIECVAIAPAASYPHLAVLSGLKKPPPASSSAEFFATGSRDKTIRLWDSRGNLIKTLVGHDNWVRALAFHPGGKHLLSVADDKTIRCWDLTQECKCVRVISDAHGHFVTCLRWAPPLIKDGGANGEAETNGTPAATSTTNGVRPDPNVATKISIRCVIATGSVDQKVRIFAT.

A LisH domain is found at 9 to 41; sequence QAEELHKSIIAYLASVNLTESSAALRAELGDSV. Residues 60–87 are a coiled coil; that stretch reads TSVVRLQKKIMDLESRCAALQSELDSAT. 8 WD repeats span residues 113 to 154, 156 to 196, 200 to 247, 250 to 289, 292 to 352, 354 to 393, 398 to 428, and 429 to 466; these read GHRN…RTVK, HTKA…KNIR, GHDH…CVKT, GHVD…TKST, GHEH…IKTL, GHDN…KCVR, AHGH…NGTP, and AATS…RIFA. The interval 417 to 439 is disordered; it reads GANGEAETNGTPAATSTTNGVRP. The segment covering 422 to 436 has biased composition (polar residues); that stretch reads AETNGTPAATSTTNG.

It belongs to the WD repeat LIS1/nudF family. In terms of assembly, self-associates. Interacts with nudE and dynein.

The protein resides in the cytoplasm. It localises to the cytoskeleton. Its subcellular location is the spindle pole. Functionally, positively regulates the activity of the minus-end directed microtubule motor protein dynein. May enhance dynein-mediated microtubule sliding by targeting dynein to the microtubule plus end. Required for nuclear migration during vegetative growth as well as development. Required for retrograde early endosome (EE) transport from the hyphal tip. Required for localization of dynein to the mitotic spindle poles. Recruits additional proteins to the dynein complex at SPBs. The chain is Nuclear distribution protein nudF from Aspergillus fumigatus (strain CBS 144.89 / FGSC A1163 / CEA10) (Neosartorya fumigata).